A 531-amino-acid chain; its full sequence is MSVDPKKLNKEVAKRRTFAIISHPDAGKTTMTEKLLLWGKAIQVVGEVKGRKTDRHATSDWMSMEQERGISITTSVMQFPYKEHMVNLLDTPGHADFSEDTYRTLTAVDSALMMVDGAKGVEERTIKLMEVCRMRDTPIISFVNKLDRQIREPLELLSEIEAVLKIKCIPVTWPIGMGQDFVGVYHLTENKTYFYEKGHGGDMTVAETREGYDYPDIRERLGALMFASFEESLELVQMALEDFDVDEFLAGEMTPVLFGTALGNFGVNMVLDTLIKYAPPPKAHPTNEREVAATETTFSGFVFKIQANMDPRHRDRIAFLRVCSGKYEKGMKLKHVRLGKDVRIADALTFLAGDREALEEAYPGDIIGLHNHGTISIGDSFTEGEELNFTGIPHFAPELFRRVILKDPLKSKALQKGLQQLSEEGATQVFMPQINNDLILGAVGVLQFEVVAHRLKEEYKVQCIFEPVSIATVRWIHCDDEVALAKFKRKAHDQLSLDGGGHLTYLAPSRVNLQLMQDRYPEVTFSNTREH.

The tr-type G domain occupies 13–282 (AKRRTFAIIS…TLIKYAPPPK (270 aa)). Residues 22 to 29 (SHPDAGKT), 90 to 94 (DTPGH), and 144 to 147 (NKLD) contribute to the GTP site.

It belongs to the TRAFAC class translation factor GTPase superfamily. Classic translation factor GTPase family. PrfC subfamily.

The protein localises to the cytoplasm. Functionally, increases the formation of ribosomal termination complexes and stimulates activities of RF-1 and RF-2. It binds guanine nucleotides and has strong preference for UGA stop codons. It may interact directly with the ribosome. The stimulation of RF-1 and RF-2 is significantly reduced by GTP and GDP, but not by GMP. The chain is Peptide chain release factor 3 from Psychrobacter cryohalolentis (strain ATCC BAA-1226 / DSM 17306 / VKM B-2378 / K5).